A 405-amino-acid polypeptide reads, in one-letter code: L-carnitine CoA-transferase (405 aa).

2 residues coordinate CoA: Lys97 and Arg104. Asp169 serves as the catalytic Nucleophile.

This sequence belongs to the CoA-transferase III family. CaiB subfamily. Homodimer.

The protein localises to the cytoplasm. The enzyme catalyses crotonobetainyl-CoA + (R)-carnitine = crotonobetaine + (R)-carnitinyl-CoA. The catalysed reaction is 4-(trimethylamino)butanoyl-CoA + (R)-carnitine = (R)-carnitinyl-CoA + 4-(trimethylamino)butanoate. Its pathway is amine and polyamine metabolism; carnitine metabolism. Catalyzes the reversible transfer of the CoA moiety from gamma-butyrobetainyl-CoA to L-carnitine to generate L-carnitinyl-CoA and gamma-butyrobetaine. Is also able to catalyze the reversible transfer of the CoA moiety from gamma-butyrobetainyl-CoA or L-carnitinyl-CoA to crotonobetaine to generate crotonobetainyl-CoA. The polypeptide is L-carnitine CoA-transferase (Escherichia coli O6:K15:H31 (strain 536 / UPEC)).